Here is a 481-residue protein sequence, read N- to C-terminus: Palmitoyltransferase PFA4 (481 aa).

The segment at 1–22 (MTNQDPDDGAYPSSQSDDDGIE) is disordered. The Cytoplasmic portion of the chain corresponds to 1–66 (MTNQDPDDGA…APLTGRRRTP (66 aa)). Residues 67–87 (LSWTEVIWVSLTLLLIAVLGY) form a helical membrane-spanning segment. Topologically, residues 88 to 108 (SSQLYVMLPYYEKTPSFSPQA) are lumenal. Residues 109–129 (LAAVLVPFNLGLLAIYYNYWL) form a helical membrane-spanning segment. Residues 130–223 (CVTTDAGSVP…LANCVGHFNH (94 aa)) are Cytoplasmic-facing. The 51-residue stretch at 181 to 231 (RYCKTCSAFKPPRSHHCKTCQRCVLRMDHHCPWLANCVGHFNHAHFIRFLF) folds into the DHHC domain. Catalysis depends on Cys211, which acts as the S-palmitoyl cysteine intermediate. Residues 224-244 (AHFIRFLFYVDVTCLYHLIMI) form a helical membrane-spanning segment. Over 245 to 265 (SCRVLDSFNSYTYWREPCARE) the chain is Lumenal. The chain crosses the membrane as a helical span at residues 266–286 (LVWLVVNYALCIPVILLVGIF). Over 287 to 481 (SLYHFYCLAV…EVRPHTPWSV (195 aa)) the chain is Cytoplasmic. The interval 370–481 (SQYRWPPKDP…EVRPHTPWSV (112 aa)) is disordered. A compositionally biased stretch (low complexity) spans 418-431 (SSPSSSDSHSSLHL). 2 stretches are compositionally biased toward basic and acidic residues: residues 441-452 (LPHHFDPPHDPD) and 466-475 (RGSEGYEVRP).

This sequence belongs to the DHHC palmitoyltransferase family. PFA4 subfamily.

The protein localises to the endoplasmic reticulum membrane. The enzyme catalyses L-cysteinyl-[protein] + hexadecanoyl-CoA = S-hexadecanoyl-L-cysteinyl-[protein] + CoA. Functionally, mediates the reversible addition of palmitate to target proteins, thereby regulating their membrane association and biological function. The sequence is that of Palmitoyltransferase PFA4 from Mycosarcoma maydis (Corn smut fungus).